A 536-amino-acid chain; its full sequence is Signal peptide peptidase-like 5 (536 aa).

Residues 1-29 (MSLPPFTCRLLAAAAALYLIGLLCVGADT) form the signal peptide. Residues 30–186 (KDVTAPKIPG…VELLLYAPKS (157 aa)) lie on the Lumenal side of the membrane. Residues 94–170 (SNLTSKLSWS…TSSGDALKKS (77 aa)) form the PA domain. 2 N-linked (GlcNAc...) asparagine glycosylation sites follow: asparagine 95 and asparagine 151. A helical transmembrane segment spans residues 187–207 (PIVDYAVVFLWLMSVGTVFVA). At 208–243 (SVWSHVTSPKKNDEQYDELSPKKSSNVDATKGGAEE) the chain is on the cytoplasmic side. The segment at 218–238 (KNDEQYDELSPKKSSNVDATK) is disordered. Residues 244-264 (ETLDISAMGAVIFVISASTFL) traverse the membrane as a helical segment. Residues 265-273 (VLLFFFMSS) are Lumenal-facing. The helical transmembrane segment at 274–296 (WFILILTIFFVIGGMQGMHNINV) threads the bilayer. The Cytoplasmic portion of the chain corresponds to 297-318 (TLITRRCSKCGQKNLKLPLLGN). Residues 319 to 339 (TSILSLVVLLFCFVVAILWFM) form a helical membrane-spanning segment. Residues 340 to 344 (NRKTS) are Lumenal-facing. The helical transmembrane segment at 345–365 (HAWAGQDIFGICMMINVLQVA) threads the bilayer. Residues 366 to 374 (RLPNIRVAT) lie on the Cytoplasmic side of the membrane. The helical transmembrane segment at 375–395 (ILLCCAFFYDIFWVFISPLIF) threads the bilayer. Aspartate 384 is an active-site residue. Over 396–428 (KQSVMIAVARGSKDTGESIPMLLRIPRLSDPWG) the chain is Lumenal. A helical membrane pass occupies residues 429-449 (GYNMIGFGDILFPGLLICFIF). Aspartate 437 is an active-site residue. Residues 450–463 (RFDKENNKGVSNGY) are Cytoplasmic-facing. The chain crosses the membrane as a helical span at residues 464-484 (FPWLMFGYGLGLFLTYLGLYV). The Lumenal segment spans residues 485–489 (MNGHG). Residues 490 to 510 (QPALLYLVPCTLGITVILGLV) traverse the membrane as a helical segment. The PAL motif lies at 491 to 493 (PAL). Over 511–536 (RKELRDLWNYGTQQPSAADVNPSPEA) the chain is Cytoplasmic.

This sequence belongs to the peptidase A22B family. In terms of processing, glycosylated.

It is found in the endosome membrane. Its function is as follows. Intramembrane-cleaving aspartic protease (I-CLiP) that cleaves type II membrane signal peptides in the hydrophobic plane of the membrane. This is Signal peptide peptidase-like 5 (SPPL5) from Arabidopsis thaliana (Mouse-ear cress).